A 230-amino-acid polypeptide reads, in one-letter code: RNA chaperone ProQ (230 aa).

Residues 104 to 176 (AEAKARVQAQ…APRQNTEKLT (73 aa)) are disordered. Positions 115-132 (AEQRAKKREAEGDKETSK) are enriched in basic and acidic residues.

This sequence belongs to the ProQ family.

The protein localises to the cytoplasm. Its function is as follows. RNA chaperone with significant RNA binding, RNA strand exchange and RNA duplexing activities. May regulate ProP activity through an RNA-based, post-transcriptional mechanism. The chain is RNA chaperone ProQ from Proteus mirabilis (strain HI4320).